We begin with the raw amino-acid sequence, 185 residues long: NEDD8-conjugating enzyme UBE2F (185 aa).

The disordered stretch occupies residues 1-21 (MLTLASKLKRDDGVKGSRTTS). Residues 1–29 (MLTLASKLKRDDGVKGSRTTSTTLDSMRR) are interaction with uba3. A UBC core domain is found at 32–185 (VRDRLLVKEV…VEDYIKRYAR (154 aa)). Cysteine 116 acts as the Glycyl thioester intermediate in catalysis.

It belongs to the ubiquitin-conjugating enzyme family. UBE2F subfamily.

The enzyme catalyses [E1 NEDD8-activating enzyme]-S-[NEDD8 protein]-yl-L-cysteine + [E2 NEDD8-conjugating enzyme]-L-cysteine = [E1 NEDD8-activating enzyme]-L-cysteine + [E2 NEDD8-conjugating enzyme]-S-[NEDD8-protein]-yl-L-cysteine.. It functions in the pathway protein modification; protein neddylation. Accepts the ubiquitin-like protein NEDD8 from the UBA3-NAE1 E1 complex and catalyzes its covalent attachment to other proteins. Together with the E3 ubiquitin ligase rnf7/rbx2, specifically neddylates cullin-5 (cul5). Does not neddylate cul1, cul2, cul3, cul4a or cul4b. This Xenopus laevis (African clawed frog) protein is NEDD8-conjugating enzyme UBE2F (ube2f).